Here is a 530-residue protein sequence, read N- to C-terminus: Phosphoenolpyruvate carboxykinase (ATP) (530 aa).

Positions 60, 195, and 201 each coordinate substrate. Residues lysine 201, histidine 221, and 237–245 contribute to the ATP site; that span reads GLSGTGKTT. Mn(2+) contacts are provided by lysine 201 and histidine 221. Aspartate 258 serves as a coordination point for Mn(2+). Glutamate 286, arginine 324, and serine 449 together coordinate ATP. Residue arginine 324 coordinates substrate.

This sequence belongs to the phosphoenolpyruvate carboxykinase (ATP) family. The cofactor is Mn(2+).

It is found in the cytoplasm. The catalysed reaction is oxaloacetate + ATP = phosphoenolpyruvate + ADP + CO2. It participates in carbohydrate biosynthesis; gluconeogenesis. Its function is as follows. Involved in the gluconeogenesis. Catalyzes the conversion of oxaloacetate (OAA) to phosphoenolpyruvate (PEP) through direct phosphoryl transfer between the nucleoside triphosphate and OAA. In Geobacter metallireducens (strain ATCC 53774 / DSM 7210 / GS-15), this protein is Phosphoenolpyruvate carboxykinase (ATP).